Here is a 356-residue protein sequence, read N- to C-terminus: Cyanuric acid amidohydrolase (356 aa).

Residues 1–99 (MPIAKVHRIA…FLVFERAEGN (99 aa)) are RU A. Residues arginine 52 and 79–80 (SG) contribute to the substrate site. The interval 106–243 (ALAIGRAHTP…HEIVVLGMSE (138 aa)) is RU B. Lysine 156 is a catalytic residue. Residues arginine 188 and 226-227 (SS) each bind substrate. Serine 226 serves as the catalytic Nucleophile. Residues 249–356 (LAIAHGVMAD…VAVIAARTMG (108 aa)) form an RU C region. Glutamate 287 provides a ligand contact to Mg(2+). Residues arginine 314 and 333–334 (SG) each bind substrate. Residues glycine 336, glutamine 339, glycine 340, proline 341, and glycine 344 each coordinate Mg(2+).

The protein belongs to the cyclic amide hydrolase (CyAH) family. As to quaternary structure, homotetramer.

The enzyme catalyses cyanurate + H2O = 1-carboxybiuret + H(+). It functions in the pathway xenobiotic degradation; atrazine degradation; biuret from cyanurate: step 1/1. With respect to regulation, inhibited by barbituric acid. Functionally, responsible for the hydrolysis of cyanuric acid, an intermediate formed during catabolism of s-triazine based compounds in herbicides such as atrazine and polymers such as melamine. Catalyzes the hydrolytic opening of the s-triazine ring of cyanuric acid (2,4,6-trihydroxy-s-triazine) to yield carbon dioxide and carboxybiuret, which spontaneously decarboxylates to biuret. This is Cyanuric acid amidohydrolase from Azorhizobium caulinodans (strain ATCC 43989 / DSM 5975 / JCM 20966 / LMG 6465 / NBRC 14845 / NCIMB 13405 / ORS 571).